The sequence spans 168 residues: Ribosome maturation factor RimP (168 aa).

It belongs to the RimP family.

The protein resides in the cytoplasm. Its function is as follows. Required for maturation of 30S ribosomal subunits. The protein is Ribosome maturation factor RimP of Mycoplasma mobile (strain ATCC 43663 / 163K / NCTC 11711) (Mesomycoplasma mobile).